Consider the following 252-residue polypeptide: tRNA (guanine-N(7)-)-methyltransferase (252 aa).

The S-adenosyl-L-methionine site is built by E51, D76, N103, and D125. D125 is an active-site residue. Substrate is bound by residues K129, D159, and 199 to 202 (TYYE).

Belongs to the class I-like SAM-binding methyltransferase superfamily. TrmB family.

It catalyses the reaction guanosine(46) in tRNA + S-adenosyl-L-methionine = N(7)-methylguanosine(46) in tRNA + S-adenosyl-L-homocysteine. Its pathway is tRNA modification; N(7)-methylguanine-tRNA biosynthesis. Functionally, catalyzes the formation of N(7)-methylguanine at position 46 (m7G46) in tRNA. In Bacteroides thetaiotaomicron (strain ATCC 29148 / DSM 2079 / JCM 5827 / CCUG 10774 / NCTC 10582 / VPI-5482 / E50), this protein is tRNA (guanine-N(7)-)-methyltransferase.